The sequence spans 390 residues: Leu/Ile/Val-binding protein homolog 6 (390 aa).

An N-terminal signal peptide occupies residues 1–21 (MKKIALTALAVFSLAASAAYA).

This sequence belongs to the leucine-binding protein family.

In terms of biological role, component of an amino-acid transport system. The protein is Leu/Ile/Val-binding protein homolog 6 of Brucella melitensis biotype 1 (strain ATCC 23456 / CCUG 17765 / NCTC 10094 / 16M).